The primary structure comprises 168 residues: Lipoprotein signal peptidase (168 aa).

2 helical membrane passes run 57–77 and 86–106; these read PKEVMILLVGTISLLIALYVF and FILPFALVFGGGVGNMIDRIT. Active-site residues include Asp-112 and Asp-138. Residues 131-151 form a helical membrane-spanning segment; the sequence is WPIFNIADSAITIGACLLILF.

The protein belongs to the peptidase A8 family.

It localises to the cell inner membrane. It catalyses the reaction Release of signal peptides from bacterial membrane prolipoproteins. Hydrolyzes -Xaa-Yaa-Zaa-|-(S,diacylglyceryl)Cys-, in which Xaa is hydrophobic (preferably Leu), and Yaa (Ala or Ser) and Zaa (Gly or Ala) have small, neutral side chains.. It participates in protein modification; lipoprotein biosynthesis (signal peptide cleavage). This protein specifically catalyzes the removal of signal peptides from prolipoproteins. The polypeptide is Lipoprotein signal peptidase (Chlorobium phaeobacteroides (strain DSM 266 / SMG 266 / 2430)).